Consider the following 314-residue polypeptide: Olfactory receptor 1E2 (314 aa).

Over 1 to 25 (MMGQNQTSISDFLLLGLPIQPEQQN) the chain is Extracellular. Residue N5 is glycosylated (N-linked (GlcNAc...) asparagine). Residues 26-49 (LCYALFLAMYLTTLLGNLLIIVLI) traverse the membrane as a helical segment. Over 50–57 (RLDSHLHT) the chain is Cytoplasmic. Residues 58-79 (PMYLFLSNLSFSDLCFSSVTIP) form a helical membrane-spanning segment. Over 80 to 100 (KLLQNMQNQDPSIPYADCLTQ) the chain is Extracellular. C97 and C189 form a disulfide bridge. Residues 101-120 (MYFFLLFGDLESFLLVAMAY) traverse the membrane as a helical segment. At 121-139 (DRYVAICFPLHYTAIMSPM) the chain is on the cytoplasmic side. A helical transmembrane segment spans residues 140-158 (LCLSLVALSWVLTTFHAML). Over 159-195 (HTLLMARLCFCADNVIPHFFCDMSALLKLACSDTRVN) the chain is Extracellular. The chain crosses the membrane as a helical span at residues 196-219 (EWVIFIMGGLIVVIPFLLILGSYA). Residues 220–236 (RIVSSILKVPSSKGICK) are Cytoplasmic-facing. A helical membrane pass occupies residues 237-259 (AFSTCGSHLSVVSLFYGTIIGLY). The Extracellular portion of the chain corresponds to 260–272 (LCPSANSSTLKET). N265 carries an N-linked (GlcNAc...) asparagine glycan. A helical membrane pass occupies residues 273–292 (VMAMMYTVVTPMLNPFIYSL). The Cytoplasmic segment spans residues 293–314 (RNRDMKGALERVICKRKNPFLL).

It belongs to the G-protein coupled receptor 1 family.

It is found in the cell membrane. Odorant receptor. In Gorilla gorilla gorilla (Western lowland gorilla), this protein is Olfactory receptor 1E2 (OR1E2).